The sequence spans 161 residues: Zinc finger A20 and AN1 domain-containing stress-associated protein 9 (161 aa).

The A20-type zinc-finger motif lies at 17–51; sequence PEAPILCVNNCGFFGSSMTNNMCSKCYRDFVKVTT. C23, C27, C39, and C42 together coordinate Zn(2+). The tract at residues 62-99 is disordered; the sequence is FTPASSSKTPLEPAKPDEVPAAAVEDKQAAQEPPKPPS. Over residues 75–90 the composition is skewed to basic and acidic residues; it reads AKPDEVPAAAVEDKQA. The AN1-type zinc-finger motif lies at 96-142; the sequence is KPPSNRCLSCRKKVGLTGFQCRCGGTFCSTHRYTEAHDCTFDYKKAG. Zn(2+) contacts are provided by C102, C105, C116, C118, C123, H126, H132, and C134.

In terms of biological role, may be involved in environmental stress response. The polypeptide is Zinc finger A20 and AN1 domain-containing stress-associated protein 9 (SAP9) (Oryza sativa subsp. japonica (Rice)).